The following is a 102-amino-acid chain: Large ribosomal subunit protein bL21 (102 aa).

The protein belongs to the bacterial ribosomal protein bL21 family. As to quaternary structure, part of the 50S ribosomal subunit. Contacts protein L20.

This protein binds to 23S rRNA in the presence of protein L20. The sequence is that of Large ribosomal subunit protein bL21 from Phytoplasma australiense.